The sequence spans 421 residues: Histidine--tRNA ligase (421 aa).

Belongs to the class-II aminoacyl-tRNA synthetase family. In terms of assembly, homodimer.

Its subcellular location is the cytoplasm. The catalysed reaction is tRNA(His) + L-histidine + ATP = L-histidyl-tRNA(His) + AMP + diphosphate + H(+). This Natranaerobius thermophilus (strain ATCC BAA-1301 / DSM 18059 / JW/NM-WN-LF) protein is Histidine--tRNA ligase.